Here is a 543-residue protein sequence, read N- to C-terminus: Sensor histidine kinase DcuS (543 aa).

The Cytoplasmic portion of the chain corresponds to M1–T20. The helical transmembrane segment at V21–F41 threads the bilayer. Residues S42–W181 are Periplasmic-facing. (R)-malate contacts are provided by residues R107–H110, K121, G140–L142, and R147. A helical transmembrane segment spans residues S182–V202. At K203–R543 the chain is on the cytoplasmic side. Residues L212–D323 form the PAS domain. Residues E346–G538 enclose the Histidine kinase domain. H349 is subject to Phosphohistidine; by autocatalysis.

Homodimer. Post-translationally, autophosphorylated. The phosphoryl group is rapidly transferred to DcuR.

The protein resides in the cell inner membrane. The enzyme catalyses ATP + protein L-histidine = ADP + protein N-phospho-L-histidine.. Member of the two-component regulatory system DcuR/DcuS. Involved in the C4-dicarboxylate-stimulated regulation of the genes encoding the anaerobic fumarate respiratory system (frdABCD; nuoAN; dcuB; sdhCDAB; etc.). Weakly regulates the aerobic C4-dicarboxylate transporter dctA. Activates DcuR by phosphorylation. The protein is Sensor histidine kinase DcuS (dcuS) of Escherichia coli O157:H7.